Reading from the N-terminus, the 228-residue chain is MSSLRNAIPRPAHKERSQPEARKRFGILEKHKDYIIRANAYHKKQETLKILRQKAAFKNPDEFNFKMINSKTVDGRHRPKDEVNKYSAEELMIMKTQDIGYVFQKWQSEKNKIDKLTASLQCTGDQSSRRHVYYAEDREEARELEVQGRSKSDISTVEIPKDIKKKMDRSYRDLEGRKSRAKDLEKLYTDMSMQKELQKKGRKRKLRDDELLNPNGKAVYKWRADRKR.

2 disordered regions span residues 1-23 (MSSL…EARK) and 192-211 (SMQK…DDEL). Residues 12-23 (AHKERSQPEARK) show a composition bias toward basic and acidic residues.

The protein belongs to the UTP11 family. In terms of assembly, component of the ribosomal small subunit (SSU) processome.

The protein resides in the nucleus. It is found in the nucleolus. Involved in nucleolar processing of pre-18S ribosomal RNA. This Arabidopsis thaliana (Mouse-ear cress) protein is Probable U3 small nucleolar RNA-associated protein 11.